Reading from the N-terminus, the 140-residue chain is Histone H2B (140 aa).

The segment at 1–47 is disordered; that stretch reads MPPKAQKTPTTGGKAPAGKAPVEKKEAGKKTAAPSGEKKKRTKTRKE. The residue at position 7 (K7) is an N6-acetyllysine; alternate. K7 participates in a covalent cross-link: Glycyl lysine isopeptide (Lys-Gly) (interchain with G-Cter in SUMO); alternate. Position 14 is an N6-acetyllysine (K14). K24 is modified (N6-acetyllysine; alternate). K24 is covalently cross-linked (Glycyl lysine isopeptide (Lys-Gly) (interchain with G-Cter in SUMO); alternate). K25 participates in a covalent cross-link: Glycyl lysine isopeptide (Lys-Gly) (interchain with G-Cter in SUMO). Residue K134 forms a Glycyl lysine isopeptide (Lys-Gly) (interchain with G-Cter in ubiquitin) linkage.

The protein belongs to the histone H2B family. In terms of assembly, the nucleosome is a histone octamer containing two molecules each of H2A, H2B, H3 and H4 assembled in one H3-H4 heterotetramer and two H2A-H2B heterodimers. The octamer wraps approximately 147 bp of DNA. In terms of processing, monoubiquitinated by BRE1 to form H2BK123ub1. H2BK123ub1 gives a specific tag for epigenetic transcriptional activation and is also prerequisite for H3K4me and H3K79me formation. H2BK123ub1 also modulates the formation of double-strand breaks during meiosis and is a prerequisite for DNA-damage checkpoint activation. Post-translationally, acetylated by GCN5 to form H2BK11ac and H2BK16ac. H2BK16ac can also be formed by ESA1. Acetylation of N-terminal lysines and particularly formation of H2BK11acK16ac has a positive effect on transcription. Sumoylation to form H2BK6su and probably also H2BK16su or H2BK17su, occurs preferentially near the telomeres and represses gene transcription.

The protein resides in the nucleus. The protein localises to the chromosome. In terms of biological role, core component of nucleosome. Nucleosomes wrap and compact DNA into chromatin, limiting DNA accessibility to the cellular machineries which require DNA as a template. Histones thereby play a central role in transcription regulation, DNA repair, DNA replication and chromosomal stability. DNA accessibility is regulated via a complex set of post-translational modifications of histones, also called histone code, and nucleosome remodeling. This Phaeosphaeria nodorum (strain SN15 / ATCC MYA-4574 / FGSC 10173) (Glume blotch fungus) protein is Histone H2B (HTB1).